Reading from the N-terminus, the 290-residue chain is Fat storage-inducing transmembrane protein 1 (290 aa).

The Lumenal portion of the chain corresponds to 1-18 (MERGPVVGAGLGARARIR). Residues 19 to 39 (TLLGCLVKVLLWVASALLYFG) form a helical membrane-spanning segment. Residues 40 to 54 (SEQAARLLGSPCLRR) lie on the Cytoplasmic side of the membrane. A helical transmembrane segment spans residues 55–75 (LYHAWLAAVVIFGPLLQFHVN). At 76–94 (PRTIFASHGNFFNIKFVNS) the chain is on the lumenal side. Residues 95 to 115 (AWGWTCTFLGGFVLLVVFLAT) traverse the membrane as a helical segment. The Cytoplasmic portion of the chain corresponds to 116-141 (RRVAVTARHLSRLVVGAAVWRGAGRA). The chain crosses the membrane as a helical span at residues 142–162 (FLLIEDLTGSCFEPLPQGLLL). Residues 163 to 187 (HELPDRRSRLAAGHQWRGYTVSSHT) lie on the Lumenal side of the membrane. Histidine 186 is a catalytic residue. Residues 188–208 (FLLTFCCLLMAEEAAVFAKYL) form a helical membrane-spanning segment. Over 209–220 (AHGLPAGAPLRL) the chain is Cytoplasmic. Residues 221–241 (VFLLNVLLLGLWNFLLLCTVI) traverse the membrane as a helical segment. Residues 242-249 (YFHQYTHK) are Lumenal-facing. Residue histidine 244 is part of the active site. The chain crosses the membrane as a helical span at residues 250–270 (VVGAAVGTFAWYLTYGSWYHQ). Residues 271 to 290 (PWSPGSPGHGLFTHPSRKHN) are Cytoplasmic-facing.

This sequence belongs to the FIT family. FIT1 subfamily.

Its subcellular location is the endoplasmic reticulum membrane. Its function is as follows. Plays an important role in the formation of lipid droplets (LDs) which are storage organelles at the center of lipid and energy homeostasis. Directly binds to diacylglycerol (DAGs) and triacylglycerol. The protein is Fat storage-inducing transmembrane protein 1 of Sus scrofa (Pig).